The primary structure comprises 384 residues: F-box protein At2g07140 (384 aa).

Residues 1–46 (MTLPELPKDLVEEILSFVPATSLKRLRSTCKGWNRLFKDDKRFTRI) enclose the F-box domain.

This chain is F-box protein At2g07140, found in Arabidopsis thaliana (Mouse-ear cress).